Here is a 184-residue protein sequence, read N- to C-terminus: NADH-quinone oxidoreductase subunit B 1 (184 aa).

The [4Fe-4S] cluster site is built by Cys-37, Cys-38, Cys-103, and Cys-132.

It belongs to the complex I 20 kDa subunit family. As to quaternary structure, NDH-1 is composed of 14 different subunits. Subunits NuoB, C, D, E, F, and G constitute the peripheral sector of the complex. The cofactor is [4Fe-4S] cluster.

It localises to the cell membrane. The catalysed reaction is a quinone + NADH + 5 H(+)(in) = a quinol + NAD(+) + 4 H(+)(out). NDH-1 shuttles electrons from NADH, via FMN and iron-sulfur (Fe-S) centers, to quinones in the respiratory chain. The immediate electron acceptor for the enzyme in this species is believed to be a menaquinone. Couples the redox reaction to proton translocation (for every two electrons transferred, four hydrogen ions are translocated across the cytoplasmic membrane), and thus conserves the redox energy in a proton gradient. The chain is NADH-quinone oxidoreductase subunit B 1 from Streptomyces griseus subsp. griseus (strain JCM 4626 / CBS 651.72 / NBRC 13350 / KCC S-0626 / ISP 5235).